A 356-amino-acid polypeptide reads, in one-letter code: Protein-glutamate methylesterase/protein-glutamine glutaminase 2 (356 aa).

Residues Arg4 to Glu121 form the Response regulatory domain. At Asp55 the chain carries 4-aspartylphosphate. The CheB-type methylesterase domain occupies Lys161 to Gly356. Catalysis depends on residues Ser173, His200, and Asp300.

It belongs to the CheB family. Post-translationally, phosphorylated by CheA. Phosphorylation of the N-terminal regulatory domain activates the methylesterase activity.

The protein localises to the cytoplasm. It carries out the reaction [protein]-L-glutamate 5-O-methyl ester + H2O = L-glutamyl-[protein] + methanol + H(+). The catalysed reaction is L-glutaminyl-[protein] + H2O = L-glutamyl-[protein] + NH4(+). Involved in chemotaxis. Part of a chemotaxis signal transduction system that modulates chemotaxis in response to various stimuli. Catalyzes the demethylation of specific methylglutamate residues introduced into the chemoreceptors (methyl-accepting chemotaxis proteins or MCP) by CheR. Also mediates the irreversible deamidation of specific glutamine residues to glutamic acid. The sequence is that of Protein-glutamate methylesterase/protein-glutamine glutaminase 2 from Methanosarcina acetivorans (strain ATCC 35395 / DSM 2834 / JCM 12185 / C2A).